The chain runs to 615 residues: Mitochondrial distribution and morphology protein 34 (615 aa).

Residues 1–195 form the SMP-LTD domain; it reads MAFNFNWSPL…LPAIIHRLSL (195 aa). Disordered stretches follow at residues 293–313, 346–566, and 596–615; these read SDKPDATATPASTPNLHRTSS, ATTG…PQPD, and PAFWEDSHQHDIPPPAYEPR. Positions 301 to 313 are enriched in polar residues; sequence TPASTPNLHRTSS. Residues 346–355 are compositionally biased toward low complexity; sequence ATTGLSLGSG. The segment covering 356 to 367 has biased composition (basic residues); the sequence is RHSKAGRKKKMR. Polar residues-rich tracts occupy residues 384-403, 435-446, and 457-499; these read IGSTSSQAGDSHTEASTRTP, DATTSARASESS, and VTAQ…YSSR. Residues 517–557 are compositionally biased toward low complexity; that stretch reads QQQQFQQQQQQQQQQQQQQQQQQQQQQQQQQQQQQQQQQQQ. Positions 596–606 are enriched in basic and acidic residues; it reads PAFWEDSHQHD.

Belongs to the MDM34 family. Component of the ER-mitochondria encounter structure (ERMES) or MDM complex, composed of mmm-1, mdm10, mdm12 and mdm34.

The protein resides in the mitochondrion outer membrane. Component of the ERMES/MDM complex, which serves as a molecular tether to connect the endoplasmic reticulum (ER) and mitochondria. Components of this complex are involved in the control of mitochondrial shape and protein biogenesis, and function in nonvesicular lipid trafficking between the ER and mitochondria. Mdm34 is required for the interaction of the ER-resident membrane protein mmm-1 and the outer mitochondrial membrane-resident beta-barrel protein mdm10. This chain is Mitochondrial distribution and morphology protein 34, found in Neurospora crassa (strain ATCC 24698 / 74-OR23-1A / CBS 708.71 / DSM 1257 / FGSC 987).